The chain runs to 493 residues: Phospholipid transfer protein (493 aa).

An N-terminal signal peptide occupies residues 1–17 (MVLLWALFLALLAGAHA). N-linked (GlcNAc...) asparagine glycosylation is found at asparagine 64, asparagine 91, asparagine 94, asparagine 117, and asparagine 143. Residues cysteine 146 and cysteine 185 are joined by a disulfide bond. Residues asparagine 245 and asparagine 398 are each glycosylated (N-linked (GlcNAc...) asparagine).

It belongs to the BPI/LBP/Plunc superfamily. BPI/LBP family. Post-translationally, glycosylation is necessary for secretion and its phospholipid transfer activity. As to expression, highest level expression in the lung, brain and heart with relatively low levels in the liver, skeletal muscle and testis and very low levels found in the spleen and kidney.

Its subcellular location is the secreted. The protein localises to the nucleus. It catalyses the reaction a 1,2-diacyl-sn-glycero-3-phosphocholine(in) = a 1,2-diacyl-sn-glycero-3-phosphocholine(out). The enzyme catalyses a 1,2-diacyl-sn-glycero-3-phosphoethanolamine(in) = a 1,2-diacyl-sn-glycero-3-phosphoethanolamine(out). It carries out the reaction a 1,2-diacyl-sn-glycerol(in) = a 1,2-diacyl-sn-glycerol(out). The catalysed reaction is a 1,2-diacyl-sn-glycero-3-phosphate(in) = a 1,2-diacyl-sn-glycero-3-phosphate(out). It catalyses the reaction a sphingomyelin(in) = a sphingomyelin(out). The enzyme catalyses a 1,2-diacyl-sn-glycero-3-phospho-(1'-sn-glycerol)(in) = a 1,2-diacyl-sn-glycero-3-phospho-(1'-sn-glycerol)(out). It carries out the reaction a 1,2-diacyl-sn-glycero-3-phospho-(1D-myo-inositol)(in) = a 1,2-diacyl-sn-glycero-3-phospho-(1D-myo-inositol)(out). The catalysed reaction is 1-hexadecanoyl-2-(5Z,8Z,11Z,14Z-eicosatetraenoyl)-sn-glycero-3-phosphoethanolamine(in) = 1-hexadecanoyl-2-(5Z,8Z,11Z,14Z-eicosatetraenoyl)-sn-glycero-3-phosphoethanolamine(out). It catalyses the reaction N-(hexadecanoyl)-sphing-4-enine-1-phosphocholine(in) = N-(hexadecanoyl)-sphing-4-enine-1-phosphocholine(out). The enzyme catalyses 1,2-dihexadecanoyl-sn-glycero-3-phosphocholine(in) = 1,2-dihexadecanoyl-sn-glycero-3-phosphocholine(out). Mediates the transfer of phospholipids and free cholesterol from triglyceride-rich lipoproteins (low density lipoproteins or LDL and very low density lipoproteins or VLDL) into high-density lipoproteins (HDL) as well as the exchange of phospholipids between triglyceride-rich lipoproteins themselves. Facilitates the transfer of a spectrum of different lipid molecules, including sphingomyelin, phosphatidylcholine, phosphatidylinositol, phosphatidylglycerol, and phosphatidyl ethanolamine. Plays an important role in HDL remodeling which involves modulating the size and composition of HDL. Also plays a key role in the uptake of cholesterol from peripheral cells and tissues that is subsequently transported to the liver for degradation and excretion. Two distinct forms of PLTP exist in plasma: an active form that can transfer phosphatidylcholine from phospholipid vesicles to HDL, and an inactive form that lacks this capability. The sequence is that of Phospholipid transfer protein (Pltp) from Mus musculus (Mouse).